Consider the following 182-residue polypeptide: NAD(P)H-quinone oxidoreductase subunit I, chloroplastic (182 aa).

4Fe-4S ferredoxin-type domains follow at residues Gly52–Glu81 and Lys92–Glu121. [4Fe-4S] cluster-binding residues include Cys61, Cys64, Cys67, Cys71, Cys101, Cys104, Cys107, and Cys111.

This sequence belongs to the complex I 23 kDa subunit family. NDH is composed of at least 16 different subunits, 5 of which are encoded in the nucleus. Requires [4Fe-4S] cluster as cofactor.

It localises to the plastid. The protein localises to the chloroplast thylakoid membrane. It carries out the reaction a plastoquinone + NADH + (n+1) H(+)(in) = a plastoquinol + NAD(+) + n H(+)(out). The enzyme catalyses a plastoquinone + NADPH + (n+1) H(+)(in) = a plastoquinol + NADP(+) + n H(+)(out). In terms of biological role, NDH shuttles electrons from NAD(P)H:plastoquinone, via FMN and iron-sulfur (Fe-S) centers, to quinones in the photosynthetic chain and possibly in a chloroplast respiratory chain. The immediate electron acceptor for the enzyme in this species is believed to be plastoquinone. Couples the redox reaction to proton translocation, and thus conserves the redox energy in a proton gradient. The polypeptide is NAD(P)H-quinone oxidoreductase subunit I, chloroplastic (Chaetosphaeridium globosum (Charophycean green alga)).